Here is a 95-residue protein sequence, read N- to C-terminus: Co-chaperonin GroES (95 aa).

The protein belongs to the GroES chaperonin family. In terms of assembly, heptamer of 7 subunits arranged in a ring. Interacts with the chaperonin GroEL.

The protein resides in the cytoplasm. Its function is as follows. Together with the chaperonin GroEL, plays an essential role in assisting protein folding. The GroEL-GroES system forms a nano-cage that allows encapsulation of the non-native substrate proteins and provides a physical environment optimized to promote and accelerate protein folding. GroES binds to the apical surface of the GroEL ring, thereby capping the opening of the GroEL channel. The sequence is that of Co-chaperonin GroES from Pelobacter propionicus (strain DSM 2379 / NBRC 103807 / OttBd1).